The following is a 434-amino-acid chain: Tol-Pal system protein TolB (434 aa).

The first 28 residues, 1-28, serve as a signal peptide directing secretion; that stretch reads MMNTRVWCKIIGMLALLVWLVSSPSVFA.

It belongs to the TolB family. As to quaternary structure, the Tol-Pal system is composed of five core proteins: the inner membrane proteins TolA, TolQ and TolR, the periplasmic protein TolB and the outer membrane protein Pal. They form a network linking the inner and outer membranes and the peptidoglycan layer.

Its subcellular location is the periplasm. In terms of biological role, part of the Tol-Pal system, which plays a role in outer membrane invagination during cell division and is important for maintaining outer membrane integrity. The chain is Tol-Pal system protein TolB from Nitrosococcus oceani (strain ATCC 19707 / BCRC 17464 / JCM 30415 / NCIMB 11848 / C-107).